Consider the following 933-residue polypeptide: Serine/threonine-protein kinase EDR1 (933 aa).

Positions M1–R10 are enriched in basic residues. 4 disordered regions span residues M1–M74, C342–G424, H527–S550, and H604–D650. The span at N37–E48 shows a compositional bias: polar residues. A compositionally biased stretch (low complexity) spans A53–S68. Positions C342–N356 are enriched in polar residues. Positions S367–S378 are enriched in low complexity. A compositionally biased stretch (basic and acidic residues) spans L379–D389. The segment covering S404–T413 has biased composition (low complexity). Polar residues predominate over residues G533–S550. The segment covering Q607 to S621 has biased composition (basic and acidic residues). A Protein kinase domain is found at L669–N925. Residues I675–V683 and K696 contribute to the ATP site. The active-site Proton acceptor is D792.

The protein belongs to the protein kinase superfamily. TKL Ser/Thr protein kinase family. RAF subfamily. Interacts with KEG. Binds and recruited by EDR4 at the powdery mildew (e.g. G.cichoracearum) penetration site on the plasma membrane. In terms of processing, autophosphorylated.

It is found in the cell membrane. It localises to the endosome. The protein resides in the nucleus. Its subcellular location is the endoplasmic reticulum. The protein localises to the golgi apparatus. It is found in the trans-Golgi network. It localises to the early endosome. The catalysed reaction is L-seryl-[protein] + ATP = O-phospho-L-seryl-[protein] + ADP + H(+). It catalyses the reaction L-threonyl-[protein] + ATP = O-phospho-L-threonyl-[protein] + ADP + H(+). Functionally, MAPKKK serine/threonine-protein kinase involved in the regulation of a MAP kinase cascade (probably including MPK3 and MPK6) that negatively regulates salicylic acid- (SA-) dependent defense responses, abscisic acid (ABA) signaling, and ethylene-induced senescence. Also modulates stress response (e.g. drought) signaling and cell death, in an ORE9-dependent manner. Functions at a point of cross talk between ethylene, ABA and SA signaling that impinges on senescence and cell death. On the other hand, it confers sensitivity to various pathogens such as the fungus E.cichoracearum, the oomycete H.parasitica and the bacteria P.syringae pv. tomato DC3000. Required for resistance to some hemibiotrophic/necrotrophic fungal pathogens (e.g. C.gloeosporioides, C.higginsianum and A.brassicicola) through the induction of defensin expression, probably by repressing MYC2, an inhibitor of defensin genes (PDFs). Together with KEG, may regulate endocytic trafficking and/or the formation of signaling complexes on trans-Golgi network (TGN)/ early endosome (EE) vesicles during stress responses. The polypeptide is Serine/threonine-protein kinase EDR1 (EDR1) (Arabidopsis thaliana (Mouse-ear cress)).